The primary structure comprises 85 residues: Conotoxin MaIr94 (85 aa).

Residues 1 to 22 form the signal peptide; the sequence is MKLTCVLIITVLFLTACQLTAA. Positions 23 to 49 are excised as a propeptide; that stretch reads GNSRDKQEDPVVRSSGEVQRSEDIKLA. 3 cysteine pairs are disulfide-bonded: cysteine 52–cysteine 69, cysteine 59–cysteine 73, and cysteine 68–cysteine 84.

This sequence belongs to the conotoxin O1 superfamily. In terms of tissue distribution, expressed by the venom duct.

The protein resides in the secreted. Produces no obvious effect on ionic currents when tested on the mouse dorsal rooted ganglia (DRG). The polypeptide is Conotoxin MaIr94 (Conus marmoreus (Marble cone)).